Reading from the N-terminus, the 181-residue chain is Ribonuclease M5 (181 aa).

One can recognise a Toprim domain in the interval 5–88 (KEIIVVEGKD…IKHAYLNTKD (84 aa)). Residues Glu11, Asp57, and Asp59 each contribute to the Mg(2+) site.

Belongs to the ribonuclease M5 family. Requires Mg(2+) as cofactor.

It is found in the cytoplasm. It catalyses the reaction Endonucleolytic cleavage of RNA, removing 21 and 42 nucleotides, respectively, from the 5'- and 3'-termini of a 5S-rRNA precursor.. In terms of biological role, required for correct processing of both the 5' and 3' ends of 5S rRNA precursor. Cleaves both sides of a double-stranded region yielding mature 5S rRNA in one step. This chain is Ribonuclease M5, found in Borreliella burgdorferi (strain ATCC 35210 / DSM 4680 / CIP 102532 / B31) (Borrelia burgdorferi).